A 90-amino-acid chain; its full sequence is MALSKDKKTEIIKKFQKNDADVGSVFVQVAVLTEEIKLLTEHLLKNKKDFISKRGLYTKVSKRKNLLNYLKQNDLNAYRNLISELELRHS.

Belongs to the universal ribosomal protein uS15 family. Part of the 30S ribosomal subunit. Forms a bridge to the 50S subunit in the 70S ribosome, contacting the 23S rRNA.

In terms of biological role, one of the primary rRNA binding proteins, it binds directly to 16S rRNA where it helps nucleate assembly of the platform of the 30S subunit by binding and bridging several RNA helices of the 16S rRNA. Functionally, forms an intersubunit bridge (bridge B4) with the 23S rRNA of the 50S subunit in the ribosome. In Mycoplasmoides gallisepticum (strain R(low / passage 15 / clone 2)) (Mycoplasma gallisepticum), this protein is Small ribosomal subunit protein uS15.